The sequence spans 149 residues: Nucleoside diphosphate kinase (149 aa).

The ATP site is built by Lys-9, Phe-57, Arg-85, Thr-91, Arg-102, and Asn-112. His-115 (pros-phosphohistidine intermediate) is an active-site residue.

It belongs to the NDK family. Homotetramer. Mg(2+) is required as a cofactor.

It localises to the cytoplasm. The enzyme catalyses a 2'-deoxyribonucleoside 5'-diphosphate + ATP = a 2'-deoxyribonucleoside 5'-triphosphate + ADP. The catalysed reaction is a ribonucleoside 5'-diphosphate + ATP = a ribonucleoside 5'-triphosphate + ADP. Major role in the synthesis of nucleoside triphosphates other than ATP. The ATP gamma phosphate is transferred to the NDP beta phosphate via a ping-pong mechanism, using a phosphorylated active-site intermediate. This Desulfitobacterium hafniense (strain DSM 10664 / DCB-2) protein is Nucleoside diphosphate kinase.